We begin with the raw amino-acid sequence, 1154 residues long: DNA-directed RNA polymerase subunit beta' (1154 aa).

Residues cysteine 60, cysteine 62, cysteine 75, and cysteine 78 each coordinate Zn(2+). Mg(2+)-binding residues include aspartate 449, aspartate 451, and aspartate 453. Cysteine 774, cysteine 848, cysteine 855, and cysteine 858 together coordinate Zn(2+).

This sequence belongs to the RNA polymerase beta' chain family. The RNAP catalytic core consists of 2 alpha, 1 beta, 1 beta' and 1 omega subunit. When a sigma factor is associated with the core the holoenzyme is formed, which can initiate transcription. The cofactor is Mg(2+). Requires Zn(2+) as cofactor.

It carries out the reaction RNA(n) + a ribonucleoside 5'-triphosphate = RNA(n+1) + diphosphate. Functionally, DNA-dependent RNA polymerase catalyzes the transcription of DNA into RNA using the four ribonucleoside triphosphates as substrates. The sequence is that of DNA-directed RNA polymerase subunit beta' from Desulforudis audaxviator (strain MP104C).